The primary structure comprises 480 residues: Protein U54 (480 aa).

This Elephas maximus (Indian elephant) protein is Protein U54.